The primary structure comprises 235 residues: Octanoyltransferase (235 aa).

Residues 28–203 (GRAEETLLLL…PFAGLPADAL (176 aa)) form the BPL/LPL catalytic domain. Residues 66–73 (RGGDVTWH), 133–135 (SIG), and 146–148 (GFA) each bind substrate. The active-site Acyl-thioester intermediate is the C164. Positions 202 to 235 (ALPEQPRDAVQPSSCDDVHAPSTTSRRPPCPLTV) are disordered.

The protein belongs to the LipB family.

Its subcellular location is the cytoplasm. The enzyme catalyses octanoyl-[ACP] + L-lysyl-[protein] = N(6)-octanoyl-L-lysyl-[protein] + holo-[ACP] + H(+). It participates in protein modification; protein lipoylation via endogenous pathway; protein N(6)-(lipoyl)lysine from octanoyl-[acyl-carrier-protein]: step 1/2. Functionally, catalyzes the transfer of endogenously produced octanoic acid from octanoyl-acyl-carrier-protein onto the lipoyl domains of lipoate-dependent enzymes. Lipoyl-ACP can also act as a substrate although octanoyl-ACP is likely to be the physiological substrate. The sequence is that of Octanoyltransferase from Geobacter sulfurreducens (strain ATCC 51573 / DSM 12127 / PCA).